Consider the following 216-residue polypeptide: Elongation factor Ts (216 aa).

Residues 81–84 (TDFV) are involved in Mg(2+) ion dislocation from EF-Tu.

Belongs to the EF-Ts family.

It localises to the cytoplasm. Its function is as follows. Associates with the EF-Tu.GDP complex and induces the exchange of GDP to GTP. It remains bound to the aminoacyl-tRNA.EF-Tu.GTP complex up to the GTP hydrolysis stage on the ribosome. The sequence is that of Elongation factor Ts from Geotalea uraniireducens (strain Rf4) (Geobacter uraniireducens).